Consider the following 268-residue polypeptide: Tetraspanin-5 (268 aa).

The Cytoplasmic portion of the chain corresponds to 1-17; that stretch reads MSGKHYKGPEVSCCIKY. The chain crosses the membrane as a helical span at residues 18-38; the sequence is FIFGFNVIFWFLGIAFLGIGL. The Extracellular segment spans residues 39–61; sequence WAWNEKGVLSNISSITDLGGFDP. A glycan (N-linked (GlcNAc...) asparagine) is linked at asparagine 49. The chain crosses the membrane as a helical span at residues 62–82; sequence VWLFLVVGGVMFILGFAGCIG. The Cytoplasmic portion of the chain corresponds to 83-92; the sequence is ALRENTFLLK. The helical transmembrane segment at 93–113 threads the bilayer; it reads FFSVFLGIIFFLELTAGVLAF. Residues 114 to 232 are Extracellular-facing; that stretch reads VFKDWIKDQL…PQFEKWLQDN (119 aa). 4 cysteine pairs are disulfide-bonded: cysteine 153–cysteine 221, cysteine 154–cysteine 186, cysteine 170–cysteine 180, and cysteine 187–cysteine 200. 2 N-linked (GlcNAc...) asparagine glycosylation sites follow: asparagine 169 and asparagine 174. Asparagine 232 carries an N-linked (GlcNAc...) asparagine glycan. A helical transmembrane segment spans residues 233–253; the sequence is LTIVAGIFIGIALLQIFGICL. The Cytoplasmic portion of the chain corresponds to 254 to 268; that stretch reads AQNLVSDIEAVRASW.

It belongs to the tetraspanin (TM4SF) family. Interacts with ADAM10; the interaction influences ADAM10 substrate specificity, endocytosis and turnover. Post-translationally, palmitoylated.

It is found in the cell membrane. In terms of biological role, part of TspanC8 subgroup, composed of 6 members that interact with the transmembrane metalloprotease ADAM10. This interaction is required for ADAM10 exit from the endoplasmic reticulum and for enzymatic maturation and trafficking to the cell surface as well as substrate specificity. Different TspanC8/ADAM10 complexes have distinct substrates. Promotes ADAM10-mediated cleavage of CD44. Seems to regulate VE-cadherin expression in endothelial cells probably through interaction with ADAM10, promoting leukocyte transmigration. This is Tetraspanin-5 (TSPAN5) from Bos taurus (Bovine).